The primary structure comprises 189 residues: Glutathione-dependent formaldehyde-activating enzyme (189 aa).

The region spanning 20–166 is the CENP-V/GFA domain; it reads FAGGTLVCAC…LRTIGLEPYD (147 aa). Zn(2+)-binding residues include C27, C29, C48, C50, C53, C95, and C98.

The protein belongs to the Gfa family. Zn(2+) is required as a cofactor.

The enzyme catalyses S-(hydroxymethyl)glutathione = glutathione + formaldehyde. Its pathway is one-carbon metabolism; formaldehyde degradation; formate from formaldehyde (glutathione route): step 1/3. Catalyzes the condensation of formaldehyde and glutathione to S-hydroxymethylglutathione. This chain is Glutathione-dependent formaldehyde-activating enzyme, found in Mesorhizobium japonicum (strain LMG 29417 / CECT 9101 / MAFF 303099) (Mesorhizobium loti (strain MAFF 303099)).